Reading from the N-terminus, the 911-residue chain is Transferrin-binding protein A (911 aa).

The signal sequence occupies residues 1–24; that stretch reads MQQQHLFRLNILCLSLMTALPAYA. Residues 38–45 carry the TonB box motif; that stretch reads DTIQVKAK. The region spanning 51–176 is the TBDR plug domain; it reads RDNEVTGLGK…LAGSVAFQTK (126 aa). Residues 187–911 enclose the TBDR beta-barrel domain; the sequence is QWGIQSKTAY…NYTFSLEMKF (725 aa). The short motif at 894–911 is the TonB C-terminal box element; the sequence is NRYAAPGRNYTFSLEMKF.

It belongs to the TonB-dependent receptor family. Binds both human apo- and holo-transferrin (TF), via the TF C-terminus. Forms a large complex with TF and TbpB.

The protein localises to the cell outer membrane. Its function is as follows. Neisseria acquires iron by extracting it from serum transferrin (TF) in its human host. Acts as a TF receptor and is required for TF utilization. Binds both apo- and holo-TF, via the TF C-terminus. The sequence is that of Transferrin-binding protein A from Neisseria meningitidis serogroup B.